We begin with the raw amino-acid sequence, 478 residues long: Cysteine--tRNA ligase (478 aa).

Cys27 contributes to the Zn(2+) binding site. A 'HIGH' region motif is present at residues 29–39; the sequence is PTTYNFIHLGN. Cys207, His232, and Glu236 together coordinate Zn(2+). The short motif at 264–268 is the 'KMSKS' region element; that stretch reads KMSKS. An ATP-binding site is contributed by Lys267.

It belongs to the class-I aminoacyl-tRNA synthetase family. As to quaternary structure, monomer. Zn(2+) serves as cofactor.

It is found in the cytoplasm. The catalysed reaction is tRNA(Cys) + L-cysteine + ATP = L-cysteinyl-tRNA(Cys) + AMP + diphosphate. This is Cysteine--tRNA ligase from Desulforudis audaxviator (strain MP104C).